A 488-amino-acid polypeptide reads, in one-letter code: Proline--tRNA ligase (488 aa).

Belongs to the class-II aminoacyl-tRNA synthetase family. ProS type 3 subfamily. As to quaternary structure, homodimer.

The protein resides in the cytoplasm. The catalysed reaction is tRNA(Pro) + L-proline + ATP = L-prolyl-tRNA(Pro) + AMP + diphosphate. Its function is as follows. Catalyzes the attachment of proline to tRNA(Pro) in a two-step reaction: proline is first activated by ATP to form Pro-AMP and then transferred to the acceptor end of tRNA(Pro). This Pyrobaculum aerophilum (strain ATCC 51768 / DSM 7523 / JCM 9630 / CIP 104966 / NBRC 100827 / IM2) protein is Proline--tRNA ligase.